Here is a 432-residue protein sequence, read N- to C-terminus: MSYLVISFSHKNTDIKLREKLAFNSDEDKDRFLKLILENDITKEAILLSTCNRVEIITRSLNIKQSSKDIIEKLATYSKVDFDVLYDRADIYDADGAVHHLFSVASALDSLVIGETQIVGQLKDAFRFSQAKGYCSLNITRVMHYAFKCAAQVRTATSLGTGSVSVASTAVSKAKDIIGNTKDVKALVVGAGEMSELTVKHLIASGFDVTIISRDTKKAQNLASTFEVHVNVEPYDKLTQLLITTPIMITATSAPYPIITKENAPSSNINRYWFDIAVPRDIDENISMSNLEIFSVDDLQDIVNENMSLRAEQAKTAYGIVSRMSLEFFEWLKSLEIEPIVKNLYLKGNEIIDKKVKNAIKKGFIDSKDEENIRKLCLTVITEYLHNPAKQLKDISKNMECDLVVGTVQNMFSLNENSTSKNRYKCDHLSKN.

Substrate is bound by residues Thr-50–Arg-53, Ser-110, Glu-115–Gln-117, and Gln-121. Cys-51 serves as the catalytic Nucleophile. Residue Gly-190–Ser-195 participates in NADP(+) binding.

Belongs to the glutamyl-tRNA reductase family. In terms of assembly, homodimer.

The enzyme catalyses (S)-4-amino-5-oxopentanoate + tRNA(Glu) + NADP(+) = L-glutamyl-tRNA(Glu) + NADPH + H(+). It functions in the pathway porphyrin-containing compound metabolism; protoporphyrin-IX biosynthesis; 5-aminolevulinate from L-glutamyl-tRNA(Glu): step 1/2. Catalyzes the NADPH-dependent reduction of glutamyl-tRNA(Glu) to glutamate 1-semialdehyde (GSA). This Aliarcobacter butzleri (strain RM4018) (Arcobacter butzleri) protein is Glutamyl-tRNA reductase.